The primary structure comprises 316 residues: Bifunctional peptidase and (3S)-lysyl hydroxylase JMJD7 (316 aa).

Residues 128–307 (VQKQCSNLPS…LKYSYFQLLD (180 aa)) form the JmjC domain. 3 residues coordinate Fe cation: His-178, Asp-180, and His-277.

As to quaternary structure, homodimer; disulfide-linked. Interacts with DRG1 and DRG2. Fe(2+) is required as a cofactor.

Its subcellular location is the nucleus. It is found in the cytoplasm. It carries out the reaction L-lysyl-[protein] + 2-oxoglutarate + O2 = (3S)-3-hydroxy-L-lysyl-[protein] + succinate + CO2. Its function is as follows. Bifunctional enzyme that acts both as an endopeptidase and 2-oxoglutarate-dependent monooxygenase. Endopeptidase that cleaves histones N-terminal tails at the carboxyl side of methylated arginine or lysine residues, to generate 'tailless nucleosomes', which may trigger transcription elongation. Preferentially recognizes and cleaves monomethylated and dimethylated arginine residues of histones H2, H3 and H4. After initial cleavage, continues to digest histones tails via its aminopeptidase activity. Additionally, may play a role in protein biosynthesis by modifying the translation machinery. Acts as a Fe(2+) and 2-oxoglutarate-dependent monooxygenase, catalyzing (S)-stereospecific hydroxylation at C-3 of 'Lys-22' of DRG1 and 'Lys-21' of DRG2 translation factors (TRAFAC), promoting their interaction with ribonucleic acids (RNA). This is Bifunctional peptidase and (3S)-lysyl hydroxylase JMJD7 from Homo sapiens (Human).